A 247-amino-acid chain; its full sequence is Small ribosomal subunit protein uS2 (247 aa).

The protein belongs to the universal ribosomal protein uS2 family.

The chain is Small ribosomal subunit protein uS2 from Cupriavidus taiwanensis (strain DSM 17343 / BCRC 17206 / CCUG 44338 / CIP 107171 / LMG 19424 / R1) (Ralstonia taiwanensis (strain LMG 19424)).